The chain runs to 345 residues: Protein arginine N-methyltransferase 1 (345 aa).

The 322-residue stretch at 24–345 (ADYYFDSYSH…VKNTQQYRMR (322 aa)) folds into the SAM-dependent MTase PRMT-type domain. The S-adenosyl-L-methionine site is built by His-37, Arg-46, Gly-70, Glu-92, and Glu-121. Active-site residues include Glu-136 and Glu-145.

The protein belongs to the class I-like SAM-binding methyltransferase superfamily. Protein arginine N-methyltransferase family. Phosphorylated during flagellum resorption.

Its subcellular location is the nucleus. The protein resides in the cell projection. The protein localises to the cilium. It localises to the flagellum. It catalyses the reaction L-arginyl-[protein] + S-adenosyl-L-methionine = N(omega)-methyl-L-arginyl-[protein] + S-adenosyl-L-homocysteine + H(+). It carries out the reaction L-arginyl-[protein] + 2 S-adenosyl-L-methionine = N(omega),N(omega)-dimethyl-L-arginyl-[protein] + 2 S-adenosyl-L-homocysteine + 2 H(+). In terms of biological role, arginine methyltransferase that methylates (mono and asymmetric dimethylation) the guanidino nitrogens of arginyl residues present in target proteins. Mediates asymmetric dimethylation of components of the axoneme during flagellum resorption, such as CCDC40/FAP172, CCDC65/FAP250, RSP1, RSP2, RPS5, RSP6, and tektin. This is Protein arginine N-methyltransferase 1 (PRMT1) from Chlamydomonas reinhardtii (Chlamydomonas smithii).